The sequence spans 408 residues: Arginine biosynthesis bifunctional protein ArgJ (408 aa).

Residues Thr158, Lys184, Thr195, Glu281, Asn403, and Thr408 each contribute to the substrate site. Thr195 serves as the catalytic Nucleophile.

Belongs to the ArgJ family. As to quaternary structure, heterotetramer of two alpha and two beta chains.

It localises to the cytoplasm. It catalyses the reaction N(2)-acetyl-L-ornithine + L-glutamate = N-acetyl-L-glutamate + L-ornithine. The enzyme catalyses L-glutamate + acetyl-CoA = N-acetyl-L-glutamate + CoA + H(+). It participates in amino-acid biosynthesis; L-arginine biosynthesis; L-ornithine and N-acetyl-L-glutamate from L-glutamate and N(2)-acetyl-L-ornithine (cyclic): step 1/1. It functions in the pathway amino-acid biosynthesis; L-arginine biosynthesis; N(2)-acetyl-L-ornithine from L-glutamate: step 1/4. In terms of biological role, catalyzes two activities which are involved in the cyclic version of arginine biosynthesis: the synthesis of N-acetylglutamate from glutamate and acetyl-CoA as the acetyl donor, and of ornithine by transacetylation between N(2)-acetylornithine and glutamate. This is Arginine biosynthesis bifunctional protein ArgJ from Shouchella clausii (strain KSM-K16) (Alkalihalobacillus clausii).